Reading from the N-terminus, the 490-residue chain is GTPase Der (490 aa).

EngA-type G domains lie at 3 to 166 and 203 to 376; these read PVVA…MDDV and IKLA…DSST. Residues 9–16, 56–60, 118–121, 209–216, 256–260, and 321–324 each bind GTP; these read GRPNVGKS, DTGGI, NKTD, DTAGV, and NKWD. Positions 377–461 constitute a KH-like domain; it reads RRVSTAMLTR…PIRIQFKEGE (85 aa).

The protein belongs to the TRAFAC class TrmE-Era-EngA-EngB-Septin-like GTPase superfamily. EngA (Der) GTPase family. As to quaternary structure, associates with the 50S ribosomal subunit.

GTPase that plays an essential role in the late steps of ribosome biogenesis. This Salmonella typhi protein is GTPase Der.